Reading from the N-terminus, the 921-residue chain is Isoleucine--tRNA ligase (921 aa).

The 'HIGH' region motif lies at 57 to 67; that stretch reads PYANGELHMGH. Residue Glu552 coordinates L-isoleucyl-5'-AMP. The 'KMSKS' region signature appears at 593–597; sequence KMSKS. Lys596 contacts ATP. Zn(2+)-binding residues include Cys888, Cys891, Cys908, and Cys911.

This sequence belongs to the class-I aminoacyl-tRNA synthetase family. IleS type 1 subfamily. In terms of assembly, monomer. Zn(2+) is required as a cofactor.

The protein resides in the cytoplasm. It carries out the reaction tRNA(Ile) + L-isoleucine + ATP = L-isoleucyl-tRNA(Ile) + AMP + diphosphate. Catalyzes the attachment of isoleucine to tRNA(Ile). As IleRS can inadvertently accommodate and process structurally similar amino acids such as valine, to avoid such errors it has two additional distinct tRNA(Ile)-dependent editing activities. One activity is designated as 'pretransfer' editing and involves the hydrolysis of activated Val-AMP. The other activity is designated 'posttransfer' editing and involves deacylation of mischarged Val-tRNA(Ile). The polypeptide is Isoleucine--tRNA ligase (Listeria monocytogenes serotype 4b (strain F2365)).